The following is a 360-amino-acid chain: Peptide chain release factor 1 (360 aa).

Q235 bears the N5-methylglutamine mark. The tract at residues 284–313 (AKRQQAEASTRRNLLGSGDRSDRNRTYNFP) is disordered.

It belongs to the prokaryotic/mitochondrial release factor family. Post-translationally, methylated by PrmC. Methylation increases the termination efficiency of RF1.

It is found in the cytoplasm. In terms of biological role, peptide chain release factor 1 directs the termination of translation in response to the peptide chain termination codons UAG and UAA. This Salmonella arizonae (strain ATCC BAA-731 / CDC346-86 / RSK2980) protein is Peptide chain release factor 1.